We begin with the raw amino-acid sequence, 1402 residues long: DNA-directed RNA polymerase subunit beta' (1402 aa).

Zn(2+) contacts are provided by Cys-71, Cys-73, Cys-86, and Cys-89. Residues Asp-462, Asp-464, and Asp-466 each coordinate Mg(2+). Zn(2+) is bound by residues Cys-808, Cys-881, Cys-888, and Cys-891.

Belongs to the RNA polymerase beta' chain family. The RNAP catalytic core consists of 2 alpha, 1 beta, 1 beta' and 1 omega subunit. When a sigma factor is associated with the core the holoenzyme is formed, which can initiate transcription. The cofactor is Mg(2+). Zn(2+) is required as a cofactor.

It carries out the reaction RNA(n) + a ribonucleoside 5'-triphosphate = RNA(n+1) + diphosphate. DNA-dependent RNA polymerase catalyzes the transcription of DNA into RNA using the four ribonucleoside triphosphates as substrates. The protein is DNA-directed RNA polymerase subunit beta' of Hyphomonas neptunium (strain ATCC 15444).